Consider the following 173-residue polypeptide: Large ribosomal subunit protein uL5 (173 aa).

It belongs to the universal ribosomal protein uL5 family. In terms of assembly, component of the large ribosomal subunit.

The protein localises to the nucleus. It localises to the cytoplasm. Its function is as follows. Component of the ribosome, a large ribonucleoprotein complex responsible for the synthesis of proteins in the cell. The small ribosomal subunit (SSU) binds messenger RNAs (mRNAs) and translates the encoded message by selecting cognate aminoacyl-transfer RNA (tRNA) molecules. The large subunit (LSU) contains the ribosomal catalytic site termed the peptidyl transferase center (PTC), which catalyzes the formation of peptide bonds, thereby polymerizing the amino acids delivered by tRNAs into a polypeptide chain. The nascent polypeptides leave the ribosome through a tunnel in the LSU and interact with protein factors that function in enzymatic processing, targeting, and the membrane insertion of nascent chains at the exit of the ribosomal tunnel. In Encephalitozoon cuniculi (strain GB-M1) (Microsporidian parasite), this protein is Large ribosomal subunit protein uL5 (RPL11).